Consider the following 533-residue polypeptide: L-aspartate oxidase 1 (533 aa).

FAD-binding positions include 10-13 (SGLA), lysine 32, 39-46 (ASDWAQGG), and aspartate 214. Arginine 281 (proton donor/acceptor) is an active-site residue. FAD is bound by residues glutamate 366 and 382–383 (SL).

The protein belongs to the FAD-dependent oxidoreductase 2 family. NadB subfamily. Requires FAD as cofactor.

The protein resides in the cytoplasm. The catalysed reaction is L-aspartate + O2 = iminosuccinate + H2O2. The protein operates within cofactor biosynthesis; NAD(+) biosynthesis; iminoaspartate from L-aspartate (oxidase route): step 1/1. In terms of biological role, catalyzes the oxidation of L-aspartate to iminoaspartate, the first step in the de novo biosynthesis of NAD(+). The chain is L-aspartate oxidase 1 (nadB1) from Ralstonia nicotianae (strain ATCC BAA-1114 / GMI1000) (Ralstonia solanacearum).